We begin with the raw amino-acid sequence, 337 residues long: Ferrochelatase (337 aa).

Residues His-189 and Glu-293 each contribute to the Fe cation site.

It belongs to the ferrochelatase family.

The protein localises to the cytoplasm. The enzyme catalyses heme b + 2 H(+) = protoporphyrin IX + Fe(2+). Its pathway is porphyrin-containing compound metabolism; protoheme biosynthesis; protoheme from protoporphyrin-IX: step 1/1. Functionally, catalyzes the ferrous insertion into protoporphyrin IX. This chain is Ferrochelatase, found in Pseudomonas putida (strain W619).